Reading from the N-terminus, the 132-residue chain is C-glycoside deglycosidase beta subunit (132 aa).

Belongs to the C-glycoside deglycosidase beta subunit family. As to quaternary structure, heterodimer composed of an alpha subunit (CarB2) and a beta subunit (CarC2). Requires a divalent metal cation as cofactor.

The enzyme catalyses 3''-dehydroorientin = 1,5-anhydro-D-erythro-hex-1-en-3-ulose + luteolin. With respect to regulation, activity is strongly reduced in the presence of chelating agents. In terms of biological role, carbon-carbon bond-cleaving enzyme which participates in the metabolism of C-glycosides. Acts on the C8-glycosylated compound 3''-dehydroorientin (3''-oxo-orientin). In Arthrobacter globiformis (strain ATCC 8010 / DSM 20124 / JCM 1332 / NBRC 12137 / NCIMB 8907 / NRRL B-2979 / 168), this protein is C-glycoside deglycosidase beta subunit.